The sequence spans 428 residues: MDQLRLEPVSRVNGVVNIPGSKSISNRALLLATLASGETTLVNLLDSDDIRHMLNALKSLGVNFTLSDDKTVCTLNGLGGPIQTDKAFELFLGNAGTAMRPLCAALTLGTGEFTLTGEPRMEERPIGDLVDALRQLGADIRYLKNDGFPPLTINATGLAGGVVEIDGSLSSQFLTALLMVAPLAKGAVTIAVKGELVSKPYIDITLDLMAKFGVTVVNDNYQRFEIASGQHYVSPGKVLVEGDASSASYFLAAGAIGGGEVKVTGVGRLAVQGDVKFADALAAMGADIEWGEDYIIARGSKLHGIDMDMNHIPDAAMTIATAALFAEGTTRMSNIYNWRIKETDRLAAMATELRKVGAKVEEGHDYIQITPPVKPVHAEIDTYNDHRMAMCFSLLAFADCGVTINDPGCTSKTFPDYFNRFANLAKPD.

3 residues coordinate 3-phosphoshikimate: Lys22, Ser23, and Arg27. Residue Lys22 coordinates phosphoenolpyruvate. The phosphoenolpyruvate site is built by Gly96 and Arg124. Residues Ser170, Ser171, Gln172, Ser198, Asp314, Asn337, and Lys341 each contribute to the 3-phosphoshikimate site. Gln172 contacts phosphoenolpyruvate. The Proton acceptor role is filled by Asp314. Phosphoenolpyruvate-binding residues include Arg345, Arg387, and Lys412.

Belongs to the EPSP synthase family. In terms of assembly, monomer.

The protein localises to the cytoplasm. The catalysed reaction is 3-phosphoshikimate + phosphoenolpyruvate = 5-O-(1-carboxyvinyl)-3-phosphoshikimate + phosphate. It functions in the pathway metabolic intermediate biosynthesis; chorismate biosynthesis; chorismate from D-erythrose 4-phosphate and phosphoenolpyruvate: step 6/7. Functionally, catalyzes the transfer of the enolpyruvyl moiety of phosphoenolpyruvate (PEP) to the 5-hydroxyl of shikimate-3-phosphate (S3P) to produce enolpyruvyl shikimate-3-phosphate and inorganic phosphate. This Shewanella amazonensis (strain ATCC BAA-1098 / SB2B) protein is 3-phosphoshikimate 1-carboxyvinyltransferase.